Reading from the N-terminus, the 459-residue chain is 4,4'-diaponeurosporen-aldehyde dehydrogenase (459 aa).

Residues 114 to 115 and 188 to 189 each bind NAD(+); these read FN and GS. Residue glutamate 210 is the Proton acceptor of the active site. Residue methionine 211 coordinates NAD(+). Residue cysteine 244 is the Nucleophile of the active site. NAD(+) is bound at residue glutamate 336.

It belongs to the aldehyde dehydrogenase family.

The enzyme catalyses 4,4'-diaponeurosporenal + NAD(+) + H2O = 4,4'-diaponeurosporenoate + NADH + 2 H(+). It functions in the pathway carotenoid biosynthesis; staphyloxanthin biosynthesis; staphyloxanthin from farnesyl diphosphate. Its function is as follows. Involved in the biosynthesis of the yellow-orange carotenoid staphyloxanthin, which plays a role in the virulence via its protective function against oxidative stress. Catalyzes the oxidation of 4,4'-diaponeurosporen-4-al to yield 4,4'-diaponeurosporenoic acid. The chain is 4,4'-diaponeurosporen-aldehyde dehydrogenase from Staphylococcus aureus (strain NCTC 8325 / PS 47).